Consider the following 440-residue polypeptide: Xylose isomerase (440 aa).

Active-site residues include His-101 and Asp-104. Mg(2+) contacts are provided by Glu-232, Glu-268, His-271, Asp-296, Asp-307, Asp-309, and Asp-339.

The protein belongs to the xylose isomerase family. In terms of assembly, homotetramer. It depends on Mg(2+) as a cofactor.

Its subcellular location is the cytoplasm. It catalyses the reaction alpha-D-xylose = alpha-D-xylulofuranose. The sequence is that of Xylose isomerase from Escherichia coli O157:H7.